Reading from the N-terminus, the 371-residue chain is uncharacterized protein (371 aa).

This sequence to E.coli YcjY.

This is an uncharacterized protein from Pseudomonas aeruginosa (strain ATCC 15692 / DSM 22644 / CIP 104116 / JCM 14847 / LMG 12228 / 1C / PRS 101 / PAO1).